The primary structure comprises 343 residues: Holliday junction branch migration complex subunit RuvB (343 aa).

Residues 1–178 are large ATPase domain (RuvB-L); it reads MNFVQQNREG…FGMILELQFY (178 aa). Residues L17, R18, G59, K62, T63, T64, 125–127, R168, Y178, and R215 contribute to the ATP site; that span reads EDY. T63 lines the Mg(2+) pocket. The interval 179–249 is small ATPAse domain (RuvB-S); sequence TVKELMEIIK…LVEKTMDILE (71 aa). A head domain (RuvB-H) region spans residues 252 to 343; that stretch reads KLGLDEMDRK…DESLRKSDES (92 aa). Positions 307 and 312 each coordinate DNA.

It belongs to the RuvB family. In terms of assembly, homohexamer. Forms an RuvA(8)-RuvB(12)-Holliday junction (HJ) complex. HJ DNA is sandwiched between 2 RuvA tetramers; dsDNA enters through RuvA and exits via RuvB. An RuvB hexamer assembles on each DNA strand where it exits the tetramer. Each RuvB hexamer is contacted by two RuvA subunits (via domain III) on 2 adjacent RuvB subunits; this complex drives branch migration. In the full resolvosome a probable DNA-RuvA(4)-RuvB(12)-RuvC(2) complex forms which resolves the HJ.

It localises to the cytoplasm. The catalysed reaction is ATP + H2O = ADP + phosphate + H(+). In terms of biological role, the RuvA-RuvB-RuvC complex processes Holliday junction (HJ) DNA during genetic recombination and DNA repair, while the RuvA-RuvB complex plays an important role in the rescue of blocked DNA replication forks via replication fork reversal (RFR). RuvA specifically binds to HJ cruciform DNA, conferring on it an open structure. The RuvB hexamer acts as an ATP-dependent pump, pulling dsDNA into and through the RuvAB complex. RuvB forms 2 homohexamers on either side of HJ DNA bound by 1 or 2 RuvA tetramers; 4 subunits per hexamer contact DNA at a time. Coordinated motions by a converter formed by DNA-disengaged RuvB subunits stimulates ATP hydrolysis and nucleotide exchange. Immobilization of the converter enables RuvB to convert the ATP-contained energy into a lever motion, pulling 2 nucleotides of DNA out of the RuvA tetramer per ATP hydrolyzed, thus driving DNA branch migration. The RuvB motors rotate together with the DNA substrate, which together with the progressing nucleotide cycle form the mechanistic basis for DNA recombination by continuous HJ branch migration. Branch migration allows RuvC to scan DNA until it finds its consensus sequence, where it cleaves and resolves cruciform DNA. The chain is Holliday junction branch migration complex subunit RuvB from Pseudothermotoga lettingae (strain ATCC BAA-301 / DSM 14385 / NBRC 107922 / TMO) (Thermotoga lettingae).